The following is a 138-amino-acid chain: MPNIFKILLIVLLAVVSFRLSASTGDKKTANDGSGNNSSAGIGTKIKRIVTAGLLFTSLATGGAEAIGRSNAQGGNAAGLVPSHVTNRSMAPPPPPVQFEMGANRLEKMRAHLRELAEKMPVNESKRLSPSGPDPHHH.

Positions 1-22 (MPNIFKILLIVLLAVVSFRLSA) are cleaved as a signal peptide. Residues 23–90 (STGDKKTAND…VPSHVTNRSM (68 aa)) form a required for secretion from the host cytoplasm to the host apoplasm region. Asparagine 37, asparagine 87, and asparagine 123 each carry an N-linked (GlcNAc...) asparagine glycan. Disordered stretches follow at residues 66–97 (AIGRSNAQGGNAAGLVPSHVTNRSMAPPPPPV) and 116–138 (LAEKMPVNESKRLSPSGPDPHHH). Positions 127-138 (RLSPSGPDPHHH) match the CLE motif.

This sequence belongs to the CLV3/ESR signal peptide family. Highly expressed exclusively within the dorsal esophageal gland cell during syncytium formation in host plants (at protein level).

Its subcellular location is the secreted. The protein localises to the host cytoplasm. It is found in the host extracellular space. It localises to the extracellular space. The protein resides in the apoplast. Mimics host plant CLE extracellular signal peptides that regulate cell fate. May play a role in the differentiation or division of feeding cells (syncytia) induced in plant roots during infection. This Heterodera glycines (Soybean cyst nematode worm) protein is CLAVATA3/ESR (CLE)-related protein 2 (CLE2).